Reading from the N-terminus, the 78-residue chain is Acyl carrier protein (78 aa).

Positions 2-77 constitute a Carrier domain; the sequence is SEIASRVKAI…DAVSYIEANA (76 aa). O-(pantetheine 4'-phosphoryl)serine is present on S37.

It belongs to the acyl carrier protein (ACP) family. In terms of processing, 4'-phosphopantetheine is transferred from CoA to a specific serine of apo-ACP by AcpS. This modification is essential for activity because fatty acids are bound in thioester linkage to the sulfhydryl of the prosthetic group.

The protein resides in the cytoplasm. Its pathway is lipid metabolism; fatty acid biosynthesis. In terms of biological role, carrier of the growing fatty acid chain in fatty acid biosynthesis. The polypeptide is Acyl carrier protein (Phocaeicola vulgatus (strain ATCC 8482 / DSM 1447 / JCM 5826 / CCUG 4940 / NBRC 14291 / NCTC 11154) (Bacteroides vulgatus)).